A 350-amino-acid polypeptide reads, in one-letter code: UDP-N-acetylglucosamine--N-acetylmuramyl-(pentapeptide) pyrophosphoryl-undecaprenol N-acetylglucosamine transferase (350 aa).

UDP-N-acetyl-alpha-D-glucosamine is bound by residues 9-11 (TGG), N123, R159, S181, and Q281.

This sequence belongs to the glycosyltransferase 28 family. MurG subfamily.

The protein localises to the cell inner membrane. The enzyme catalyses di-trans,octa-cis-undecaprenyl diphospho-N-acetyl-alpha-D-muramoyl-L-alanyl-D-glutamyl-meso-2,6-diaminopimeloyl-D-alanyl-D-alanine + UDP-N-acetyl-alpha-D-glucosamine = di-trans,octa-cis-undecaprenyl diphospho-[N-acetyl-alpha-D-glucosaminyl-(1-&gt;4)]-N-acetyl-alpha-D-muramoyl-L-alanyl-D-glutamyl-meso-2,6-diaminopimeloyl-D-alanyl-D-alanine + UDP + H(+). The protein operates within cell wall biogenesis; peptidoglycan biosynthesis. Its function is as follows. Cell wall formation. Catalyzes the transfer of a GlcNAc subunit on undecaprenyl-pyrophosphoryl-MurNAc-pentapeptide (lipid intermediate I) to form undecaprenyl-pyrophosphoryl-MurNAc-(pentapeptide)GlcNAc (lipid intermediate II). In Helicobacter hepaticus (strain ATCC 51449 / 3B1), this protein is UDP-N-acetylglucosamine--N-acetylmuramyl-(pentapeptide) pyrophosphoryl-undecaprenol N-acetylglucosamine transferase.